The following is a 302-amino-acid chain: Mediator of RNA polymerase II transcription subunit 6 (302 aa).

The segment at 260-281 is disordered; it reads ATGQTGATSRFENGSSRSSTDA.

The protein belongs to the Mediator complex subunit 6 family. Component of the Mediator complex.

It localises to the nucleus. Component of the Mediator complex, a coactivator involved in the regulated transcription of nearly all RNA polymerase II-dependent genes. Mediator functions as a bridge to convey information from gene-specific regulatory proteins to the basal RNA polymerase II transcription machinery. Mediator is recruited to promoters by direct interactions with regulatory proteins and serves as a scaffold for the assembly of a functional preinitiation complex with RNA polymerase II and the general transcription factors. The protein is Mediator of RNA polymerase II transcription subunit 6 (MED6) of Candida glabrata (strain ATCC 2001 / BCRC 20586 / JCM 3761 / NBRC 0622 / NRRL Y-65 / CBS 138) (Yeast).